Reading from the N-terminus, the 379-residue chain is Homoserine O-succinyltransferase (379 aa).

An AB hydrolase-1 domain is found at 51-360; the sequence is NAVLICHALS…DSPYGHDAFL (310 aa). The active-site Nucleophile is the serine 157. Arginine 227 provides a ligand contact to substrate. Residues aspartate 323 and histidine 356 contribute to the active site. Aspartate 357 is a substrate binding site.

The protein belongs to the AB hydrolase superfamily. MetX family. In terms of assembly, homodimer.

It is found in the cytoplasm. It catalyses the reaction L-homoserine + succinyl-CoA = O-succinyl-L-homoserine + CoA. It participates in amino-acid biosynthesis; L-methionine biosynthesis via de novo pathway; O-succinyl-L-homoserine from L-homoserine: step 1/1. Functionally, transfers a succinyl group from succinyl-CoA to L-homoserine, forming succinyl-L-homoserine. The sequence is that of Homoserine O-succinyltransferase from Pseudomonas putida (strain ATCC 700007 / DSM 6899 / JCM 31910 / BCRC 17059 / LMG 24140 / F1).